We begin with the raw amino-acid sequence, 321 residues long: MRNTFLEFEQPLAELENKIEQLRYVQADSAVDISDEIGRLQQKSQNLAKEIYGKLTPWQTALVARHPQRPYTLDYVREIFTDFHELHGDRMYADDQSIVGGLARFNGSACMVIGHQKGRDTKERAARNFGMPRPEGYRKALRLMRLAEKFRLPIFTFIDTPGAYPGIGAEERGQSEAIGRNLYAMAELKVPVICTVIGEGGSGGALAIAVGNAVLMLQYATYSVISPEGCASILWRSADKAPEAAEALAITAPRLKDLGLVDRVVNEPVGGAHRDPRVMARLLRRALGDALRQLQGLGPEQLVDQRLQRLMSYGRFQEVRA.

In terms of domain architecture, CoA carboxyltransferase C-terminal spans 39-293 (RLQQKSQNLA…RRALGDALRQ (255 aa)).

It belongs to the AccA family. In terms of assembly, acetyl-CoA carboxylase is a heterohexamer composed of biotin carboxyl carrier protein (AccB), biotin carboxylase (AccC) and two subunits each of ACCase subunit alpha (AccA) and ACCase subunit beta (AccD).

Its subcellular location is the cytoplasm. It carries out the reaction N(6)-carboxybiotinyl-L-lysyl-[protein] + acetyl-CoA = N(6)-biotinyl-L-lysyl-[protein] + malonyl-CoA. It functions in the pathway lipid metabolism; malonyl-CoA biosynthesis; malonyl-CoA from acetyl-CoA: step 1/1. Component of the acetyl coenzyme A carboxylase (ACC) complex. First, biotin carboxylase catalyzes the carboxylation of biotin on its carrier protein (BCCP) and then the CO(2) group is transferred by the carboxyltransferase to acetyl-CoA to form malonyl-CoA. The polypeptide is Acetyl-coenzyme A carboxylase carboxyl transferase subunit alpha (Bordetella bronchiseptica (strain ATCC BAA-588 / NCTC 13252 / RB50) (Alcaligenes bronchisepticus)).